The following is a 256-amino-acid chain: MPRSCYSRSGTLLLALLLQISMEVRGWCLESSQCQDLTTERHLLECLRACKPDLSAETPVFPGGADEQTPTESPRKYVTGHFRWGRFGRGNSSGASQKREEEAAAADPGFHGDGVEPGLREDKRSYSMEHFRWGKPVGKKRRPVKVYANGAEEESAEAFPLEFKRELTGERPAAAPGPDGLGFGLVAEAEAEAAAAEKKDAAEKKDDGSYRMEHFRWGTPRKGKRYGGFMTSEKSQTPLVTLFKNAIVKNAHKKGQ.

Positions 1–26 are cleaved as a signal peptide; that stretch reads MPRSCYSRSGTLLLALLLQISMEVRG. Cysteines 28 and 50 form a disulfide. A glycan (O-linked (GalNAc...) threonine) is linked at Thr71. Position 87 is a phenylalanine amide (Phe87). The interval 88–120 is disordered; sequence GRGNSSGASQKREEEAAAADPGFHGDGVEPGLR. N-linked (GlcNAc...) asparagine glycosylation is present at Asn91. Residues 100–122 constitute a propeptide that is removed on maturation; it reads EEEAAAADPGFHGDGVEPGLRED. Ser125 is subject to N-acetylserine; in Corticotropin. Position 137 is a valine amide (Val137). Ser155 carries the phosphoserine modification.

This sequence belongs to the POMC family. In terms of processing, specific enzymatic cleavages at paired basic residues yield the different active peptides. In terms of tissue distribution, ACTH and MSH are produced by the pituitary gland.

It is found in the secreted. Functionally, ACTH stimulates the adrenal glands to release cortisol. MSH (melanocyte-stimulating hormone) increases the pigmentation of skin by increasing melanin production in melanocytes. In terms of biological role, beta-endorphin and Met-enkephalin are endogenous opiates. Its function is as follows. Stimulates the adrenal glands to release cortisol. Functionally, anorexigenic peptide. Increases the pigmentation of skin by increasing melanin production in melanocytes. Increases the pigmentation of skin by increasing melanin production in melanocytes. In terms of biological role, endogenous orexigenic opiate. Its function is as follows. Endogenous opiate. This chain is Pro-opiomelanocortin (POMC), found in Cavia porcellus (Guinea pig).